Reading from the N-terminus, the 235-residue chain is Ubiquinone biosynthesis O-methyltransferase (235 aa).

4 residues coordinate S-adenosyl-L-methionine: R36, G56, D77, and M122.

It belongs to the methyltransferase superfamily. UbiG/COQ3 family.

The catalysed reaction is a 3-demethylubiquinol + S-adenosyl-L-methionine = a ubiquinol + S-adenosyl-L-homocysteine + H(+). The enzyme catalyses a 3-(all-trans-polyprenyl)benzene-1,2-diol + S-adenosyl-L-methionine = a 2-methoxy-6-(all-trans-polyprenyl)phenol + S-adenosyl-L-homocysteine + H(+). Its pathway is cofactor biosynthesis; ubiquinone biosynthesis. In terms of biological role, O-methyltransferase that catalyzes the 2 O-methylation steps in the ubiquinone biosynthetic pathway. The protein is Ubiquinone biosynthesis O-methyltransferase of Leptothrix cholodnii (strain ATCC 51168 / LMG 8142 / SP-6) (Leptothrix discophora (strain SP-6)).